Reading from the N-terminus, the 374-residue chain is Ribosomal RNA large subunit methyltransferase G (374 aa).

This sequence belongs to the methyltransferase superfamily. RlmG family.

Its subcellular location is the cytoplasm. The enzyme catalyses guanosine(1835) in 23S rRNA + S-adenosyl-L-methionine = N(2)-methylguanosine(1835) in 23S rRNA + S-adenosyl-L-homocysteine + H(+). Functionally, specifically methylates the guanine in position 1835 (m2G1835) of 23S rRNA. The protein is Ribosomal RNA large subunit methyltransferase G of Ectopseudomonas mendocina (strain ymp) (Pseudomonas mendocina).